The primary structure comprises 253 residues: MTITGQINSETLNNGVPIFAPPYRWSKHWPRFTDVNCITIRYRTDGSSIRQYIPDNLQIEETPIVTIMLLDFGFSVIGPYHELIHCVEVTYEGKKYNYSFLLILDNEEACIGGRELLGNPKVLGTIEFDRQNRPPTAFIHGRVLRPSNTVIADIHFKPLCLVLDAGESKTPITGLNLRLIPSLIPGAPPSVREYTNVDFTLQGGEVWEGVGSLNFPSNSEFEPLHKFPVLEYLSATYHRGAWVEQRLLNVYSF.

K121 functions as the Schiff-base intermediate with acetoacetate in the catalytic mechanism.

The protein belongs to the ADC family.

The protein operates within mycotoxin biosynthesis. Decarboxylase; part of the Tox1B locus, one of the 2 loci that mediate the biosynthesis of T-toxin, a family of linear polyketides 37 to 45 carbons in length, of which the major component is 41 carbons, and which leads to high virulence to maize. One of the PKSs (PKS1 or PKS2) could synthesize a precursor, used subsequently by the other PKS as starter unit, to add additional carbons. Variability in the length of the final carbon backbone C35-47 could be achieved by varying the number of condensation cycles, or use of different starter or extender units or might be due to decarboxylation of the penultimate product, catalyzed by DEC1. Additional proteins are required for the biosynthesis of T-toxin, including oxidoreductases RED1, RED2, RED3, LAM1 and OXI1, as well as esterase TOX9. The chain is Decarboxylase DEC1 from Cochliobolus heterostrophus (strain C4 / ATCC 48331 / race T) (Southern corn leaf blight fungus).